Consider the following 289-residue polypeptide: Cyclo(L-tyrosyl-L-tyrosyl) synthase (289 aa).

Residues 1 to 48 (MSYVAAEPGVLISPTDDLQSPRSAPAAHDENADGITGGTRDDSAPNSR) form a disordered region. Serine 88 (nucleophile) is an active-site residue. Residues asparagine 91, 229–233 (YICAE), and tyrosine 253 each bind substrate.

It belongs to the CDPS family. Homodimer.

The enzyme catalyses 2 L-tyrosyl-tRNA(Tyr) = cyclo(L-tyrosyl-L-tyrosyl) + 2 tRNA(Tyr). In terms of biological role, involved in the biosynthesis of mycocyclosin. It uses activated amino acids in the form of aminoacyl-tRNAs (aa-tRNAs) as substrates to catalyze the ATP-independent formation of cyclodipeptides which are intermediates in diketopiperazine (DKP) biosynthetic pathways. Catalyzes the formation of cyclo(L-Tyr-L-Tyr) (cYY) from L-tyrosyl-tRNA(Tyr). This is Cyclo(L-tyrosyl-L-tyrosyl) synthase from Mycobacterium tuberculosis (strain CDC 1551 / Oshkosh).